Consider the following 209-residue polypeptide: LexA repressor (209 aa).

Residues 30 to 50 (RVEIAREIGFKSPNAAEEHLK) constitute a DNA-binding region (H-T-H motif). Catalysis depends on for autocatalytic cleavage activity residues Ser-126 and Lys-163.

The protein belongs to the peptidase S24 family. As to quaternary structure, homodimer.

The enzyme catalyses Hydrolysis of Ala-|-Gly bond in repressor LexA.. Represses a number of genes involved in the response to DNA damage (SOS response), including recA and lexA. In the presence of single-stranded DNA, RecA interacts with LexA causing an autocatalytic cleavage which disrupts the DNA-binding part of LexA, leading to derepression of the SOS regulon and eventually DNA repair. The sequence is that of LexA repressor from Glaesserella parasuis serovar 5 (strain SH0165) (Haemophilus parasuis).